The primary structure comprises 206 residues: Alpha-amylase/trypsin inhibitor (206 aa).

Cystine bridges form between cysteine 9–cysteine 205, cysteine 51–cysteine 61, cysteine 66–cysteine 72, cysteine 118–cysteine 194, cysteine 124–cysteine 177, cysteine 132–cysteine 142, cysteine 146–cysteine 155, and cysteine 156–cysteine 164.

It belongs to the thaumatin family.

Its function is as follows. Inhibits both trypsin and alpha-amylase. Inhibits the growth of some plant fungal pathogens. In Zea mays (Maize), this protein is Alpha-amylase/trypsin inhibitor.